The sequence spans 300 residues: Protein Bel-1 (300 aa).

Residues 1-50 (MDSYEKEESVASTSGIQDLQTLSELVGPENAGEGELTIAEEPEENPRRPR) are disordered. Residues 10-23 (VASTSGIQDLQTLS) are compositionally biased toward polar residues. Residues 89–200 (SKSLCKRLIL…SEGPKPRPRH (112 aa)) mediate DNA binding. The tract at residues 209–244 (FEKHHKPRQKRPRRRSIDNESCASSSDTMANEPGSL) is disordered. A compositionally biased stretch (basic residues) spans 211 to 222 (KHHKPRQKRPRR). Residues 214–223 (KPRQKRPRRR) carry the Nuclear localization signal motif. Positions 224 to 300 (SIDNESCASS…PSGSGEHSVL (77 aa)) are transactivation domain. Polar residues predominate over residues 227-237 (NESCASSSDTM).

As to quaternary structure, homodimer or homomultimer. Forms complexes with the host nuclear factors NFIA, NFIB, NFIC or NFIX.

Its subcellular location is the host nucleus. In terms of biological role, transcriptional transactivator that activates the viral internal promoter (IP), thereby enhancing its own expression. This transactivation is repressed by nuclear factor I. Also transactivates the long terminal repeat (LTR) promoter, thereby inducing structural gene expression, initiating the late phase of infection. It is therefore a key regulator of viral gene expression. It directly binds to and activates DNA target sites of viral promoters and those of distinct cellular genes. Required for viral replication. In Human spumaretrovirus (SFVcpz(hu)), this protein is Protein Bel-1 (bel1).